Here is a 139-residue protein sequence, read N- to C-terminus: Large ribosomal subunit protein uL16 (139 aa).

Residues 1–21 (MLMPKRVQYRKTQRGRMKGNA) are disordered. Basic residues predominate over residues 7 to 17 (VQYRKTQRGRM).

This sequence belongs to the universal ribosomal protein uL16 family. As to quaternary structure, part of the 50S ribosomal subunit.

Binds 23S rRNA and is also seen to make contacts with the A and possibly P site tRNAs. The protein is Large ribosomal subunit protein uL16 of Chlorobaculum tepidum (strain ATCC 49652 / DSM 12025 / NBRC 103806 / TLS) (Chlorobium tepidum).